The following is an 858-amino-acid chain: Tetratricopeptide repeat protein 7A (858 aa).

S51 is subject to Phosphoserine. 6 TPR repeats span residues 121–157 (CEAM…MENK), 177–210 (ERLP…AQVF), 414–447 (FHLW…RPSD), 497–531 (YSLQ…APSD), 533–565 (QVIL…RKDD), and 566–599 (AHAL…HPEN). Residue S182 is modified to Phosphoserine. Phosphoserine is present on residues S647, S678, S679, and S690. Residue T693 is modified to Phosphothreonine. TPR repeat units lie at residues 745-778 (HSVL…NPDG), 780-812 (RIMH…QSTC), and 813-846 (HEAW…EASS).

In terms of assembly, component of a phosphatidylinositol 4-kinase (PI4K) complex, composed of PI4KA, EFR3 (EFR3A or EFR3B), TTC7 (TTC7A or TTC7B) and HYCC (HYCC1 or HYCC2). Interacts with PI4KA. Interaction with PI4KA is direct. Interacts with EFR3 (EFR3A or EFR3B), interaction is direct. Interacts with HYCC (HYCC1 or HYCC2), interaction is direct. Association with the PI4K complex is strongly reduced by TMEM150A. Expressed in epithelial cells of the intestine, thymus, and pancreas (at protein level).

It is found in the cytoplasm. The protein resides in the cell membrane. Its function is as follows. Component of a complex required to localize phosphatidylinositol 4-kinase (PI4K) to the plasma membrane. The complex acts as a regulator of phosphatidylinositol 4-phosphate (PtdIns(4)P) synthesis. In the complex, plays a central role in bridging PI4KA to EFR3B and HYCC1, via direct interactions. The protein is Tetratricopeptide repeat protein 7A of Homo sapiens (Human).